Reading from the N-terminus, the 126-residue chain is Anti-adapter protein IraD (126 aa).

It belongs to the GpW/Gp25 family. IraD subfamily. As to quaternary structure, interacts with RssB.

It is found in the cytoplasm. Functionally, inhibits RpoS proteolysis by regulating RssB activity, thereby increasing the stability of the sigma stress factor RpoS during oxidative stress. Its effect on RpoS stability is due to its interaction with RssB, which probably blocks the interaction of RssB with RpoS, and the consequent delivery of the RssB-RpoS complex to the ClpXP protein degradation pathway. This chain is Anti-adapter protein IraD, found in Salmonella paratyphi A (strain ATCC 9150 / SARB42).